The following is a 304-amino-acid chain: Virulence protein VirA (304 aa).

Its function is as follows. Could be involved in the biosynthesis of a major surface antigen important for virulence. The chain is Virulence protein VirA (virA) from Vibrio anguillarum (strain ATCC 68554 / 775) (Listonella anguillarum).